Reading from the N-terminus, the 163-residue chain is 2-C-methyl-D-erythritol 2,4-cyclodiphosphate synthase (163 aa).

D10 and H12 together coordinate a divalent metal cation. 4-CDP-2-C-methyl-D-erythritol 2-phosphate-binding positions include 10 to 12 and 36 to 37; these read DVH and HS. H44 lines the a divalent metal cation pocket. 4-CDP-2-C-methyl-D-erythritol 2-phosphate is bound by residues 58–60, 63–67, 134–137, F141, and R144; these read DIG, FPDND, and TTTE.

Belongs to the IspF family. Homotrimer. A divalent metal cation serves as cofactor.

It catalyses the reaction 4-CDP-2-C-methyl-D-erythritol 2-phosphate = 2-C-methyl-D-erythritol 2,4-cyclic diphosphate + CMP. It functions in the pathway isoprenoid biosynthesis; isopentenyl diphosphate biosynthesis via DXP pathway; isopentenyl diphosphate from 1-deoxy-D-xylulose 5-phosphate: step 4/6. Its function is as follows. Involved in the biosynthesis of isopentenyl diphosphate (IPP) and dimethylallyl diphosphate (DMAPP), two major building blocks of isoprenoid compounds. Catalyzes the conversion of 4-diphosphocytidyl-2-C-methyl-D-erythritol 2-phosphate (CDP-ME2P) to 2-C-methyl-D-erythritol 2,4-cyclodiphosphate (ME-CPP) with a corresponding release of cytidine 5-monophosphate (CMP). This Carboxydothermus hydrogenoformans (strain ATCC BAA-161 / DSM 6008 / Z-2901) protein is 2-C-methyl-D-erythritol 2,4-cyclodiphosphate synthase.